The following is a 141-amino-acid chain: Arsenate reductase (141 aa).

The Nucleophile; cysteine thioarsenate intermediate role is filled by Cys-12.

The protein belongs to the ArsC family. Monomer in solution.

It catalyses the reaction [glutaredoxin]-dithiol + arsenate + glutathione + H(+) = glutathionyl-S-S-[glutaredoxin] + arsenite + H2O. Its activity is regulated as follows. Inhibited by the thiol reagents iodoacetate (IAA) and N-ethylmaleimide (NEM). Activity is rapidly inactivated by the histidine-modifying reagent diethylpyrocarbonate (DEPC). Involved in resistance to arsenate. Catalyzes the reduction of arsenate [As(V)] to arsenite [As(III)]. The resulting arsenite is then extruded from the cell via the ArsAB transport system. The polypeptide is Arsenate reductase (Escherichia coli).